Here is a 635-residue protein sequence, read N- to C-terminus: Chaperone protein HtpG (635 aa).

Residues methionine 1 to arginine 346 are a; substrate-binding. Positions glutamate 347–arginine 563 are b. The segment at methionine 564 to alanine 635 is c.

It belongs to the heat shock protein 90 family. As to quaternary structure, homodimer.

It is found in the cytoplasm. Functionally, molecular chaperone. Has ATPase activity. This Bordetella parapertussis (strain 12822 / ATCC BAA-587 / NCTC 13253) protein is Chaperone protein HtpG.